A 365-amino-acid polypeptide reads, in one-letter code: Aspartate-semialdehyde dehydrogenase (365 aa).

Thr15, Gly16, Thr17, Val18, Ser40, Ser43, Leu89, and Asp90 together coordinate NADP(+). The Acyl-thioester intermediate role is filled by Cys156. An NADP(+)-binding site is contributed by Gly188. His255 acts as the Proton acceptor in catalysis. Position 342 (Asn342) interacts with NADP(+).

Belongs to the aspartate-semialdehyde dehydrogenase family. In terms of assembly, homotetramer; dimer of dimers.

The protein localises to the cytoplasm. The protein resides in the cytosol. Its subcellular location is the nucleus. The catalysed reaction is L-aspartate 4-semialdehyde + phosphate + NADP(+) = 4-phospho-L-aspartate + NADPH + H(+). It participates in amino-acid biosynthesis; L-methionine biosynthesis via de novo pathway; L-homoserine from L-aspartate: step 2/3. It functions in the pathway amino-acid biosynthesis; L-threonine biosynthesis; L-threonine from L-aspartate: step 2/5. Inhibited by the competitive inhibitor 1,4-benzoquinone and derivates such as 2-chloro-3-methoxy-1,4-naphthoquinone, 2,3-dichloro-1,4-naphthoquinone, 2-chloro-1,4-naphthoquinone, 2-bromo-1,4-naphthoquinone and 2,3-dichloro-5,8-dihydroxy-1,4-naphthoquinone. Its function is as follows. Catalyzes the NADPH-dependent formation of L-aspartate 4-semialdehyde (L-ASA) by the reductive dephosphorylation of 4-phospho-L-aspartate. Mediates the second step in the biosynthesis of amino acids that derive from aspartate (the aspartate family of amino acids), including methioinine and threonine, the latter of which is a precursor to isoleucine. In Cryptococcus neoformans var. neoformans serotype D (strain JEC21 / ATCC MYA-565) (Filobasidiella neoformans), this protein is Aspartate-semialdehyde dehydrogenase.